A 692-amino-acid chain; its full sequence is Structure-specific endonuclease subunit SLX4 (692 aa).

The disordered stretch occupies residues 39–59 (SDDEDQDEEQETEIPPEEGDD).

Belongs to the SLX4 family. As to quaternary structure, forms a heterodimer with SLX1. In terms of processing, phosphorylated in response to DNA damage.

Its subcellular location is the nucleus. In terms of biological role, regulatory subunit of the SLX1-SLX4 structure-specific endonuclease that resolves DNA secondary structures generated during DNA repair and recombination. Has endonuclease activity towards branched DNA substrates, introducing single-strand cuts in duplex DNA close to junctions with ss-DNA. The chain is Structure-specific endonuclease subunit SLX4 from Kluyveromyces lactis (strain ATCC 8585 / CBS 2359 / DSM 70799 / NBRC 1267 / NRRL Y-1140 / WM37) (Yeast).